The sequence spans 153 residues: UPF0756 membrane protein LCABL_15860 (153 aa).

The next 4 helical transmembrane spans lie at 4–24 (WLFL…SLII), 52–72 (WGVT…EIGF), 85–105 (WIAI…VGLL), and 115–135 (LVFG…GPVI).

The protein belongs to the UPF0756 family.

It localises to the cell membrane. The chain is UPF0756 membrane protein LCABL_15860 from Lacticaseibacillus casei (strain BL23) (Lactobacillus casei).